We begin with the raw amino-acid sequence, 600 residues long: DNA mismatch repair protein MutL (600 aa).

Belongs to the DNA mismatch repair MutL/HexB family.

In terms of biological role, this protein is involved in the repair of mismatches in DNA. It is required for dam-dependent methyl-directed DNA mismatch repair. May act as a 'molecular matchmaker', a protein that promotes the formation of a stable complex between two or more DNA-binding proteins in an ATP-dependent manner without itself being part of a final effector complex. The sequence is that of DNA mismatch repair protein MutL from Rickettsia typhi (strain ATCC VR-144 / Wilmington).